The following is a 247-amino-acid chain: MKILLLLLTLSLASRTKAGEIIGGHEVKPHSRPYMALLSIKDQQPEAICGGFLIREDFVLTAAHCEGSIINVTLGAHNIKEQEKTQQVIPMVKCIPHPDYNPKTFSNDIMLLKLKSKAKRTRAVRPLNLPRRNVNVKPGDVCYVAGWGRMAPMGKYSNTLQEVELTVQKDRECESYFKNRYNKTNQICAGDPKTKRASFRGDSGGPLVCKKVAAGIVSYGYKDGSPPRAFTKVSSFLSWIKKTMKSS.

The signal sequence occupies residues 1-18 (MKILLLLLTLSLASRTKA). Residues 19–20 (GE) constitute a propeptide, activation peptide. The region spanning 21 to 245 (IIGGHEVKPH…FLSWIKKTMK (225 aa)) is the Peptidase S1 domain. A disulfide bridge links C49 with C65. H64 serves as the catalytic Charge relay system. Residue N71 is glycosylated (N-linked (GlcNAc...) asparagine). The Charge relay system role is filled by D108. Cystine bridges form between C142–C209 and C173–C188. N182 carries an N-linked (GlcNAc...) asparagine glycan. The active-site Charge relay system is the S203.

The protein belongs to the peptidase S1 family. Granzyme subfamily.

Its subcellular location is the secreted. It is found in the cytolytic granule. It catalyses the reaction Preferential cleavage: -Asp-|-Xaa- &gt;&gt; -Asn-|-Xaa- &gt; -Met-|-Xaa-, -Ser-|-Xaa-.. With respect to regulation, inactivated by the serine protease inhibitor diisopropylfluorophosphate. Functionally, abundant protease in the cytosolic granules of cytotoxic T-cells and NK-cells which activates caspase-independent pyroptosis when delivered into the target cell through the immunological synapse. It cleaves after Asp. Once delivered into the target cell, acts by catalyzing cleavage of gasdermin-E (GSDME), releasing the pore-forming moiety of GSDME, thereby triggering pyroptosis and target cell death. Seems to be linked to an activation cascade of caspases (aspartate-specific cysteine proteases) responsible for apoptosis execution. Cleaves caspase-3 and -9 (CASP3 and CASP9, respectively) to give rise to active enzymes mediating apoptosis. Cleaves and activates CASP7 in response to bacterial infection, promoting plasma membrane repair. In Mus musculus (Mouse), this protein is Granzyme B(G,H) (Gzmb).